Consider the following 100-residue polypeptide: Large ribosomal subunit protein bL21 (100 aa).

It belongs to the bacterial ribosomal protein bL21 family. In terms of assembly, part of the 50S ribosomal subunit. Contacts protein L20.

This protein binds to 23S rRNA in the presence of protein L20. The protein is Large ribosomal subunit protein bL21 of Ureaplasma urealyticum serovar 10 (strain ATCC 33699 / Western).